We begin with the raw amino-acid sequence, 96 residues long: Prokineticin Bm8-d (96 aa).

Positions 1–19 (MKCFAQIVVLLLVIAFSHG) are cleaved as a signal peptide. 5 disulfides stabilise this stretch: C26–C38, C32–C50, C37–C78, C60–C86, and C80–C95.

This sequence belongs to the AVIT (prokineticin) family. As to expression, expressed by the skin glands.

The protein localises to the secreted. Its function is as follows. Potent agonist for both PKR1/PROKR1 and PKR2/PROKR2, and inducer of a potent and long-lasting hyperalgesia. Also potentiates capsaicin-induced TRPV1 current, when tested on DRG neurons. At subnanomolar concentrations, this protein both induces potent chemotaxis of macrophages and stimulates LPS-induced production of the pro-inflammatory cytokines IL-1 and IL-12. In vivo, potently stimulates the contraction of the guinea-pig gastrointestinal (GI) smooth muscle (nanomolar concentration). The chain is Prokineticin Bm8-d from Bombina maxima (Giant fire-bellied toad).